The chain runs to 662 residues: Glycine--tRNA ligase beta subunit (662 aa).

This sequence belongs to the class-II aminoacyl-tRNA synthetase family. As to quaternary structure, tetramer of two alpha and two beta subunits.

The protein localises to the cytoplasm. It catalyses the reaction tRNA(Gly) + glycine + ATP = glycyl-tRNA(Gly) + AMP + diphosphate. This is Glycine--tRNA ligase beta subunit from Rickettsia akari (strain Hartford).